Reading from the N-terminus, the 585-residue chain is Protein DENND6B (585 aa).

A uDENN domain is found at 43 to 214; it reads ECVCVVTFDL…LPVMGVVVQV (172 aa). The cDENN domain occupies 246 to 373; that stretch reads VHELDLFRCF…VKLKKPSRLK (128 aa). In terms of domain architecture, dDENN spans 375-499; the sequence is LDTKPGLYTA…KSPHFDGWYR (125 aa).

Belongs to the DENND6 family.

Its subcellular location is the recycling endosome. The protein localises to the cytoplasm. Functionally, guanine nucleotide exchange factor (GEF) for RAB14. Also has some, lesser GEF activity towards RAB35. The protein is Protein DENND6B (DENND6B) of Homo sapiens (Human).